The following is a 365-amino-acid chain: NAD(P)H-quinone oxidoreductase subunit 1, chloroplastic (365 aa).

Helical transmembrane passes span 29–49 (IWLL…VLVI), 106–126 (IAVI…HLVL), 129–149 (LSIG…GLLM), 250–270 (YSGI…LVSS), 302–322 (IFGM…FLFI), and 338–358 (LLNL…LLTT).

This sequence belongs to the complex I subunit 1 family. NDH is composed of at least 16 different subunits, 5 of which are encoded in the nucleus.

It localises to the plastid. It is found in the chloroplast thylakoid membrane. It catalyses the reaction a plastoquinone + NADH + (n+1) H(+)(in) = a plastoquinol + NAD(+) + n H(+)(out). The catalysed reaction is a plastoquinone + NADPH + (n+1) H(+)(in) = a plastoquinol + NADP(+) + n H(+)(out). Its function is as follows. NDH shuttles electrons from NAD(P)H:plastoquinone, via FMN and iron-sulfur (Fe-S) centers, to quinones in the photosynthetic chain and possibly in a chloroplast respiratory chain. The immediate electron acceptor for the enzyme in this species is believed to be plastoquinone. Couples the redox reaction to proton translocation, and thus conserves the redox energy in a proton gradient. This is NAD(P)H-quinone oxidoreductase subunit 1, chloroplastic from Acorus calamus (Sweet flag).